A 439-amino-acid chain; its full sequence is Glutamate--tRNA ligase 2 (439 aa).

A 'HIGH' region motif is present at residues 9–19 (PSPTGHLHVGN). Residues 233–237 (KLSKR) carry the 'KMSKS' region motif. Lys236 lines the ATP pocket.

Belongs to the class-I aminoacyl-tRNA synthetase family. Glutamate--tRNA ligase type 1 subfamily. As to quaternary structure, monomer.

Its subcellular location is the cytoplasm. The enzyme catalyses tRNA(Glu) + L-glutamate + ATP = L-glutamyl-tRNA(Glu) + AMP + diphosphate. Catalyzes the attachment of glutamate to tRNA(Glu) in a two-step reaction: glutamate is first activated by ATP to form Glu-AMP and then transferred to the acceptor end of tRNA(Glu). This is Glutamate--tRNA ligase 2 from Sphingopyxis alaskensis (strain DSM 13593 / LMG 18877 / RB2256) (Sphingomonas alaskensis).